The sequence spans 1020 residues: Mediator of RNA polymerase II transcription subunit 16 (1020 aa).

This sequence belongs to the Mediator complex subunit 16 family. In terms of assembly, component of the Mediator complex.

Its subcellular location is the nucleus. Functionally, component of the Mediator complex, a coactivator involved in the regulated transcription of nearly all RNA polymerase II-dependent genes. Mediator functions as a bridge to convey information from gene-specific regulatory proteins to the basal RNA polymerase II transcription machinery. Mediator is recruited to promoters by direct interactions with regulatory proteins and serves as a scaffold for the assembly of a functional preinitiation complex with RNA polymerase II and the general transcription factors. This chain is Mediator of RNA polymerase II transcription subunit 16 (SIN4), found in Scheffersomyces stipitis (strain ATCC 58785 / CBS 6054 / NBRC 10063 / NRRL Y-11545) (Yeast).